We begin with the raw amino-acid sequence, 775 residues long: Ubiquitin carboxyl-terminal hydrolase 14 (775 aa).

The UBP-type 1; degenerate zinc finger occupies 1-108 (MSCPHLTETN…EDLYDYFYVP (108 aa)). Positions 25, 28, 41, 44, 49, 56, 60, 66, 153, 155, 174, 177, 186, 189, 194, 207, 211, 217, 236, and 239 each coordinate Zn(2+). A UBP-type 2 zinc finger spans residues 151-259 (TTCDHIINLP…THMLNFGIDI (109 aa)). The USP domain occupies 300 to 774 (TGLKNLGNSC…TGYVYLFERL (475 aa)). Cysteine 309 serves as the catalytic Nucleophile. Serine 456 carries the phosphoserine modification. 2 UBA domains span residues 576–617 (EWNQ…LFEH) and 639–679 (SVSE…ILNH). Histidine 730 serves as the catalytic Proton acceptor.

The protein belongs to the peptidase C19 family.

It catalyses the reaction Thiol-dependent hydrolysis of ester, thioester, amide, peptide and isopeptide bonds formed by the C-terminal Gly of ubiquitin (a 76-residue protein attached to proteins as an intracellular targeting signal).. The polypeptide is Ubiquitin carboxyl-terminal hydrolase 14 (ubp14) (Schizosaccharomyces pombe (strain 972 / ATCC 24843) (Fission yeast)).